A 641-amino-acid polypeptide reads, in one-letter code: Soluble starch synthase 1, chloroplastic/amyloplastic (641 aa).

The transit peptide at 1–113 (MATAAGMGIG…DSIDKTIFVA (113 aa)) directs the protein to the chloroplast. Positions 62–96 (TFLVPTSTPPAPTQSPAPAPTPPPLPDSGVGEIEP) are disordered. The span at 68–87 (STPPAPTQSPAPAPTPPPLP) shows a compositional bias: pro residues. Lys147 contributes to the ADP-alpha-D-glucose binding site.

This sequence belongs to the glycosyltransferase 1 family. Bacterial/plant glycogen synthase subfamily. As to expression, leaves and immature seeds.

Its subcellular location is the plastid. The protein resides in the chloroplast. It is found in the amyloplast. The catalysed reaction is [(1-&gt;4)-alpha-D-glucosyl](n) + ADP-alpha-D-glucose = [(1-&gt;4)-alpha-D-glucosyl](n+1) + ADP + H(+). It functions in the pathway glycan biosynthesis; starch biosynthesis. Involved in starch synthesis in endosperm amyloplasts. Plays a role in the elongation of amylopectin chains. Synthesizes preferentially amylopectin chains with a degree of polymerization (DP) of 7 to 11 by elongating chains with a DP of 4 to 7. Generates distincly chains with a DP of 8 to 12 chains from short chains with a DP of 6 to 7. The sequence is that of Soluble starch synthase 1, chloroplastic/amyloplastic from Oryza sativa subsp. japonica (Rice).